A 139-amino-acid chain; its full sequence is ATP synthase epsilon chain (139 aa).

This sequence belongs to the ATPase epsilon chain family. As to quaternary structure, F-type ATPases have 2 components, CF(1) - the catalytic core - and CF(0) - the membrane proton channel. CF(1) has five subunits: alpha(3), beta(3), gamma(1), delta(1), epsilon(1). CF(0) has three main subunits: a, b and c.

Its subcellular location is the cell membrane. Its function is as follows. Produces ATP from ADP in the presence of a proton gradient across the membrane. This Levilactobacillus brevis (strain ATCC 367 / BCRC 12310 / CIP 105137 / JCM 1170 / LMG 11437 / NCIMB 947 / NCTC 947) (Lactobacillus brevis) protein is ATP synthase epsilon chain.